The sequence spans 687 residues: Chloride channel protein ClC-Ka (687 aa).

The next 4 helical transmembrane spans lie at 52-72 (FLMTLGVLMALVSYAMNFAIG), 161-181 (LFLGKVGPFVHLSVMIAAYLG), 202-222 (VAAAAVGVATVFAAPFSGVLF), and 236-256 (YWRGFFAATCGAFIFRLLAVF). 4 residues coordinate Ca(2+): glutamate 259, glutamate 261, aspartate 278, and glutamate 281. 6 helical membrane passes run 282-302 (IFFFVALGGICGVLSCAYLFC), 329-349 (ALATLLLASITYPPGVGHFLA), 396-416 (FTIFGTLAFFLVMKFWMLILA), 417-437 (TTIPMPAGYFMPIFILGAAIG), 452-472 (IVTGGVTNPIMPGGYALAGAA), and 486-506 (LLAFELTGQIVHALPVLMAVL). Residues 507 to 687 (AANAIAQSCQ…SNLTNPPAPK (181 aa)) lie on the Cytoplasmic side of the membrane. 2 consecutive CBS domains span residues 551–609 (MNHS…EPPS) and 626–684 (CPTE…TNPP).

This sequence belongs to the chloride channel (TC 2.A.49) family. CLCNKA subfamily. Homodimer. Interacts with BSND.

It localises to the basolateral cell membrane. The catalysed reaction is chloride(in) = chloride(out). It catalyses the reaction bromide(in) = bromide(out). It carries out the reaction nitrate(in) = nitrate(out). The enzyme catalyses iodide(out) = iodide(in). Its activity is regulated as follows. Activated by extracellular Ca(2+) and inhibited by extracellular acidic pH. In terms of biological role, anion-selective channel permeable to small monovalent anions with ion selectivity for chloride &gt; bromide &gt; nitrate &gt; iodide. Forms a homodimeric channel where each subunit has its own ion conduction pathway. May conduct double-barreled currents controlled by two types of gates, two fast gates that control each subunit independently and a slow common gate that opens and shuts off both subunits simultaneously. Assembles with the regulatory subunit BSND/Barttin for sorting at the basolateral plasma membrane domain and functional switch to the ion conducting state. CLCNKA:BSND channels display mostly a linear current-voltage relationship with fast gating at negative potentials. Mediates transepithelial chloride transport from the lumen to interstitial compartment along the thin ascending limb of Henle's loop, contributing to generation of hypertonic medullary interstitium as a countercurrent system to achieve urine concentration. Conducts chloride currents in the stria vascularis of the inner ear to establish the endocochlear potential necessary for normal hearing. The polypeptide is Chloride channel protein ClC-Ka (Homo sapiens (Human)).